Reading from the N-terminus, the 179-residue chain is Sec-independent protein translocase protein TatB (179 aa).

The helical transmembrane segment at 1–21 (MFDLGFWEVLIIMLIGLLILG) threads the bilayer. Composition is skewed to basic and acidic residues over residues 75–86 (KDVEKNARRFEA) and 94–106 (TFRD…DDAA). The disordered stretch occupies residues 75–179 (KDVEKNARRF…QGGGGEEKRQ (105 aa)).

Belongs to the TatB family. In terms of assembly, the Tat system comprises two distinct complexes: a TatABC complex, containing multiple copies of TatA, TatB and TatC subunits, and a separate TatA complex, containing only TatA subunits. Substrates initially bind to the TatABC complex, which probably triggers association of the separate TatA complex to form the active translocon.

Its subcellular location is the cell inner membrane. Functionally, part of the twin-arginine translocation (Tat) system that transports large folded proteins containing a characteristic twin-arginine motif in their signal peptide across membranes. Together with TatC, TatB is part of a receptor directly interacting with Tat signal peptides. TatB may form an oligomeric binding site that transiently accommodates folded Tat precursor proteins before their translocation. The sequence is that of Sec-independent protein translocase protein TatB from Alkalilimnicola ehrlichii (strain ATCC BAA-1101 / DSM 17681 / MLHE-1).